We begin with the raw amino-acid sequence, 296 residues long: Vacuolar histidine transporter YPQ3 (296 aa).

The Vacuolar portion of the chain corresponds to 1–12; that stretch reads MKLIPIILNAKN. The region spanning 10 to 76 is the PQ-loop 1 domain; it reads AKNLSGMAGS…QNLLPTMIIL (67 aa). A helical membrane pass occupies residues 13–33; that stretch reads LSGMAGSISICCWIVVFVPQI. At 34–44 the chain is on the cytoplasmic side; it reads YENFRRQSAEG. Residues 45 to 65 traverse the membrane as a helical segment; sequence LSLLFIVLWLLGDIFNVMGAM. Residues 66-68 lie on the Vacuolar side of the membrane; sequence MQN. Residues 69 to 89 traverse the membrane as a helical segment; that stretch reads LLPTMIILAAYYTLADLILLI. The Cytoplasmic segment spans residues 90–163; that stretch reads QCMWYDKEKK…RTIVVKEREN (74 aa). Residues 164 to 184 form a helical membrane-spanning segment; it reads FFNDFLIVSGVLIAGILSWYI. Over 185–199 the chain is Vacuolar; it reads SYCSGLDNGIPKKKP. A helical membrane pass occupies residues 200-220; the sequence is AFEQINLPAQILGYLSAILYL. Positions 208–270 constitute a PQ-loop 2 domain; the sequence is AQILGYLSAI…ASWLIGSAGT (63 aa). Residues 221–238 lie on the Cytoplasmic side of the membrane; it reads GSRIPQIVLNFKRKSCEG. A helical membrane pass occupies residues 239–259; it reads VSFLFFLFACLGNTSFIISVL. The Vacuolar portion of the chain corresponds to 260 to 262; that stretch reads SAS. The helical transmembrane segment at 263–283 threads the bilayer; the sequence is WLIGSAGTLLMDFTVFIQFFL. Over 284–296 the chain is Cytoplasmic; the sequence is YAKPKYEKILIDN.

Belongs to the laat-1 family.

Its subcellular location is the vacuole membrane. It is found in the mitochondrion membrane. Functionally, amino acid transporter that moves histidine into the vacuole. May also contribute to low affinity arginine import into the vacuole. May function as an amino acid/proton antiporter. The protein is Vacuolar histidine transporter YPQ3 of Saccharomyces cerevisiae (strain ATCC 204508 / S288c) (Baker's yeast).